The following is a 400-amino-acid chain: Cysteine desulfurase (400 aa).

Pyridoxal 5'-phosphate-binding positions include 72 to 73, asparagine 152, glutamine 180, and 200 to 202; these read GT and SGH. Lysine 203 bears the N6-(pyridoxal phosphate)lysine mark. Pyridoxal 5'-phosphate is bound at residue threonine 238. Cysteine 326 serves as the catalytic Cysteine persulfide intermediate. Cysteine 326 is a binding site for [2Fe-2S] cluster.

Belongs to the class-V pyridoxal-phosphate-dependent aminotransferase family. NifS/IscS subfamily. In terms of assembly, homodimer. The cofactor is pyridoxal 5'-phosphate.

The catalysed reaction is (sulfur carrier)-H + L-cysteine = (sulfur carrier)-SH + L-alanine. In terms of biological role, catalyzes the removal of elemental sulfur atoms from cysteine to produce alanine. Seems to participate in the biosynthesis of the nitrogenase metalloclusters by providing the inorganic sulfur required for the Fe-S core formation. In Gluconacetobacter diazotrophicus (strain ATCC 49037 / DSM 5601 / CCUG 37298 / CIP 103539 / LMG 7603 / PAl5), this protein is Cysteine desulfurase.